The primary structure comprises 176 residues: RNA polymerase sigma factor SigZ (176 aa).

Positions 30–43 (DLLQIVFMKIQVHL) match the Polymerase core binding motif. Residues 125–144 (QKELSEKLGISYSGAKSRVQ) constitute a DNA-binding region (H-T-H motif).

Belongs to the sigma-70 factor family. ECF subfamily.

Sigma factors are initiation factors that promote the attachment of RNA polymerase to specific initiation sites and are then released. This Bacillus subtilis (strain 168) protein is RNA polymerase sigma factor SigZ (sigZ).